A 949-amino-acid polypeptide reads, in one-letter code: ATPase 5, plasma membrane-type (949 aa).

An N-acetylserine modification is found at Ser2. Residues 2–61 (SELDHIKNESVDLVRIPMEEVFEELKCTKQGLTANEASHRLDVFGPNKLEEKKESKLLKF) lie on the Cytoplasmic side of the membrane. The chain crosses the membrane as a helical span at residues 62–81 (LGFMWNPLSWVMEVAALMAI). Over 82 to 93 (ALANGGGRPPDW) the chain is Extracellular. A helical transmembrane segment spans residues 94-114 (QDFVGIVCLLLINSTISFIEE). Over 115–243 (NNAGNAAAAL…GHFQKVLTSI (129 aa)) the chain is Cytoplasmic. The chain crosses the membrane as a helical span at residues 244–264 (GNFCICSIALGIIVELLVMYP). Residues 265–273 (IQRRRYRDG) lie on the Extracellular side of the membrane. The chain crosses the membrane as a helical span at residues 274–291 (IDNLLVLLIGGIPIAMPS). Residues 292 to 643 (VLSVTMATGS…TSRAIFQRMK (352 aa)) lie on the Cytoplasmic side of the membrane. Asp329 serves as the catalytic 4-aspartylphosphate intermediate. Asp588 and Asp592 together coordinate Mg(2+). A helical membrane pass occupies residues 644–665 (NYTIYAVSITIRIVFGFMFIAL). Residues 666 to 670 (IWQFD) lie on the Extracellular side of the membrane. The helical transmembrane segment at 671–693 (FSPFMVLIIAILNDGTIMTISKD) threads the bilayer. Over 694–709 (RMKPSPQPDSWKLRDI) the chain is Cytoplasmic. Residues 710 to 730 (FSTGVVLGGYQALMTVVFFWV) traverse the membrane as a helical segment. Over 731-751 (MKDSDFFSNYFGVRPLSQRPE) the chain is Extracellular. A helical transmembrane segment spans residues 752–772 (QMMAALYLQVSIISQALIFVT). Residues 773–784 (RSRSWSYAECPG) lie on the Cytoplasmic side of the membrane. Residues 785 to 805 (LLLLGAFVIAQLVATFIAVYA) form a helical membrane-spanning segment. Over 806 to 813 (NWSFARIE) the chain is Extracellular. A helical membrane pass occupies residues 814 to 834 (GAGWGWAGVIWLYSFLTYIPL). The Cytoplasmic portion of the chain corresponds to 835–949 (DLLKFGIRYV…IDTIQQHYTV (115 aa)). Thr881 carries the phosphothreonine modification. A phosphoserine mark is found at Ser899 and Ser931. Residues 947–949 (YTV) form an interaction with 14-3-3 proteins region. Residue Thr948 is modified to Phosphothreonine.

Belongs to the cation transport ATPase (P-type) (TC 3.A.3) family. Type IIIA subfamily. In terms of assembly, binds to 14-3-3 proteins. The binding is induced by phosphorylation of Thr-948. Binding to 14-3-3 proteins activates the H(+)-ATPase. As to expression, expressed in guard cells and leaves.

Its subcellular location is the membrane. It catalyses the reaction ATP + H2O + H(+)(in) = ADP + phosphate + 2 H(+)(out). In terms of biological role, the plasma membrane H(+) ATPase of plants and fungi generates a proton gradient that drives the active transport of nutrients by H(+)-symport. The resulting external acidification and/or internal alkinization may mediate growth responses. The chain is ATPase 5, plasma membrane-type (AHA5) from Arabidopsis thaliana (Mouse-ear cress).